The sequence spans 485 residues: MSKVKESAIVSATSALQPQGPSSSYGLINSFAHQYDRGGANVNGKPSYTVDQAANYLLRDGAAWKDLNKDGTISLSYTFLTKAPSDFYSRGLGTFSQFSDLQKGQAKLAMQSWADVAKVTFTEAASGGDGHMTFGNFSASNGGAAFAYLPFDMPGSHKGESWYLINSSYQVNTTPGTGNYGRQTLTHEIGHVLGLSHPGDYNAGEGNPTYRDATYAQDTRGYSVMSYWSESNTGQNFVKAGGQYYASAPLMDDIAAIQKLYGANYATRSGDTVYGFNSNADRDFYSATSSSSKLVFSVWDGGGNDTFDFSGFTQNQKINLNETSFSDVGGMIGNVSIAKGVTIENAFGGSGNDLLIGNALANVLKGGAGNDIIYGGGGADQLWGGTGADTFVFGAISDSTKAAPDRIMDFTSGQDKIDLSAISAFAVNKLPLQFVNAFTGHAGEAVLSYDQGTNLGSLSIDFTGNSSADFLVTTVGQAAVTDIVV.

Position 187 (His-187) interacts with Zn(2+). Glu-188 is an active-site residue. Zn(2+) is bound by residues His-191 and His-197. 38 residues coordinate Ca(2+): Arg-268, Gly-270, Thr-272, Asp-300, Gly-302, Gly-303, Asp-305, Thr-342, Glu-344, Gly-349, Gly-351, Asp-353, Asn-358, Leu-360, Asn-362, Gly-366, Gly-367, Ala-368, Gly-369, Asp-371, Gly-375, Gly-376, Gly-377, Gly-378, Asp-380, Gly-384, Gly-385, Thr-386, Gly-387, Asp-389, Asp-398, Asp-405, Asp-415, Asp-461, Thr-463, Asn-465, Ser-467, and Asp-469. 3 Hemolysin-type calcium-binding repeats span residues 347-364, 365-382, and 383-395; these read FGGSGNDLLIGNALANVL, KGGAGNDIIYGGGGADQL, and WGGTGADTFVFGA.

It belongs to the peptidase M10B family. Ca(2+) is required as a cofactor. It depends on Zn(2+) as a cofactor.

The protein localises to the secreted. In terms of biological role, secreted protease which is important for P.entomophila to counteract the local immune response of Drosophila. Can degrade antimicrobial peptides (AMPs), e.g. Diptericin and Cecropin A. Thus, protects P.entomophila from the Drosophila antimicrobial peptides produced by the gut innate immune response, and promotes bacterial persistence in the Drosophila gut and killing of the host. Is responsible for maturation of pro-Monalysin to the active toxin Monalysin, by cleaving its N-terminus. This chain is Metalloprotease AprA, found in Pseudomonas entomophila (strain L48).